Here is a 473-residue protein sequence, read N- to C-terminus: Photosystem II CP43 reaction center protein (473 aa).

Positions Met1 to Glu14 are excised as a propeptide. Thr15 is subject to N-acetylthreonine. At Thr15 the chain carries Phosphothreonine. A run of 5 helical transmembrane segments spans residues Leu69–Ala93, Leu134–Asn155, Lys178–Thr200, Lys255–Ser275, and Trp291–Ala312. A [CaMn4O5] cluster-binding site is contributed by Glu367. The helical transmembrane segment at Arg447–Pro471 threads the bilayer.

This sequence belongs to the PsbB/PsbC family. PsbC subfamily. As to quaternary structure, PSII is composed of 1 copy each of membrane proteins PsbA, PsbB, PsbC, PsbD, PsbE, PsbF, PsbH, PsbI, PsbJ, PsbK, PsbL, PsbM, PsbT, PsbX, PsbY, PsbZ, Psb30/Ycf12, at least 3 peripheral proteins of the oxygen-evolving complex and a large number of cofactors. It forms dimeric complexes. The cofactor is Binds multiple chlorophylls and provides some of the ligands for the Ca-4Mn-5O cluster of the oxygen-evolving complex. It may also provide a ligand for a Cl- that is required for oxygen evolution. PSII binds additional chlorophylls, carotenoids and specific lipids.. Post-translationally, phosphorylated on threonine residue(s).

It is found in the plastid. The protein localises to the chloroplast thylakoid membrane. In terms of biological role, one of the components of the core complex of photosystem II (PSII). It binds chlorophyll and helps catalyze the primary light-induced photochemical processes of PSII. PSII is a light-driven water:plastoquinone oxidoreductase, using light energy to abstract electrons from H(2)O, generating O(2) and a proton gradient subsequently used for ATP formation. This Marchantia polymorpha (Common liverwort) protein is Photosystem II CP43 reaction center protein.